Reading from the N-terminus, the 1141-residue chain is Envelopment polyprotein (1141 aa).

The N-terminal stretch at 1–18 (MGRLYLIVLGVLITATAG) is a signal peptide. Residues 19-483 (FPRSVHELKI…HSLAVELCVP (465 aa)) are Lumenal-facing. Intrachain disulfides connect cysteine 30–cysteine 158, cysteine 64–cysteine 164, cysteine 113–cysteine 135, cysteine 140–cysteine 145, cysteine 182–cysteine 192, cysteine 217–cysteine 253, cysteine 242–cysteine 357, cysteine 382–cysteine 441, cysteine 386–cysteine 395, and cysteine 458–cysteine 481. Asparagine 141 is a glycosylation site (N-linked (GlcNAc...) asparagine; by host). N-linked (GlcNAc...) asparagine; by host glycosylation occurs at asparagine 353. Asparagine 405 carries N-linked (GlcNAc...) asparagine; by host glycosylation. Residues 484–506 (GIHGWATIALVITFCFGWLLIPT) traverse the membrane as a helical segment. Over 507–633 (TTMVVLKCLR…LGVFRYKSRC (127 aa)) the chain is Cytoplasmic. The binding to the ribonucleoprotein stretch occupies residues 522–539 (CSHYSTESKFKVILEKVK). 2 consecutive CCHC-type zinc fingers follow at residues 551-571 (CDICHHECETAKELESHKKSC) and 576-597 (CPYCMTITEATESALQAHYAVC). Binding to the ribonucleoprotein regions lie at residues 594–611 (YAVCKLTGRFHEALKKSL), 598–609 (KLTGRFHEALKK), and 617–631 (QRGCYRTLGVFRYKS). One can recognise an ITAM domain in the interval 617-640 (QRGCYRTLGVFRYKSRCYVGLVWM). Phosphotyrosine is present on residues tyrosine 621 and tyrosine 634. Residues 621-624 (YRTL) carry the YxxL motif. The chain crosses the membrane as a helical span at residues 634-654 (YVGLVWMCLLTLELIVWAASA). The Lumenal portion of the chain corresponds to 655–1110 (DTPLLEPGWS…EWLLGILNGN (456 aa)). Disulfide bonds link cysteine 741–cysteine 776, cysteine 745–cysteine 783, cysteine 757–cysteine 890, cysteine 771–cysteine 901, cysteine 786–cysteine 909, cysteine 812–cysteine 821, cysteine 829–cysteine 838, and cysteine 869–cysteine 873. Residues 763 to 783 (YQYETSWSCNPPDCPGVGTGC) form a fusion loop region. N-linked (GlcNAc...) asparagine; by host glycosylation occurs at asparagine 933. 5 disulfides stabilise this stretch: cysteine 975-cysteine 1005, cysteine 998-cysteine 1050, cysteine 1015-cysteine 1020, cysteine 1051-cysteine 1056, and cysteine 1090-cysteine 1094. The chain crosses the membrane as a helical span at residues 1111-1131 (WVVVAVLVIILLISIFLFSFF). Residues 1127 to 1141 (LFSFFCPIRSHKKQL) are binding to the ribonucleoprotein. Over 1132 to 1141 (CPIRSHKKQL) the chain is Cytoplasmic.

The protein belongs to the hantavirus envelope glycoprotein family. As to quaternary structure, homodimer. Homotetramer; forms heterotetrameric Gn-Gc spikes in the pre-fusion conformation. Interacts (via C-terminus) with the nucleoprotein. Interacts with host TUFM; this interaction contributes to the virus-induced degradation of mitochondria by autophagy, which leads to degradation of host MAVS and inhibition of type I interferon (IFN) responses. Interacts with host MAP1LC3B; this interaction contributes to the virus-induced degradation of mitochondria by autophagy, which leads to degradation of host MAVS and inhibition of type I interferon (IFN) responses. Homodimer. Homotetramer; forms heterotetrameric Gn-Gc spikes in the pre-fusion conformation. Homotrimer; forms homotrimer in the post-fusion conformation at acidic pH. Interacts (via C-terminus) with the nucleoprotein. In terms of processing, envelope polyprotein precursor is quickly cleaved in vivo just after synthesis, presumably by host signal peptidase.

Its subcellular location is the virion membrane. It localises to the host cell surface. It is found in the host Golgi apparatus membrane. The protein resides in the host endoplasmic reticulum membrane. The protein localises to the host mitochondrion. Functionally, forms homotetramers with glycoprotein C at the surface of the virion. Attaches the virion to host cell receptors including integrin ITGAV/ITGB3. This attachment induces virion internalization predominantly through clathrin-dependent endocytosis. Mediates the assembly and budding of infectious virus particles through its interaction with the nucleocapsid protein and the viral genome. May dysregulate normal immune and endothelial cell responses through an ITAM motif. Translocates to mitochondria, binds to host TUFM and recruits MAP1LC3B. These interactions induce mitochondrial autophagy and therefore destruction of host MAVS leading to inhibition of type I interferon (IFN) responses. Concomitant breakdown of glycoprotein N is apparently prevented by the nucleoprotein that may inhibit Gn-stimulated autophagosome-lysosome fusion. Interacts with the viral genomic RNA. Forms homotetramers with glycoprotein N at the surface of the virion. Attaches the virion to host cell receptors including integrin ITGAV/ITGB3. This attachment induces virion internalization predominantly through clathrin-dependent endocytosis. Class II fusion protein that promotes fusion of viral membrane with host endosomal membrane after endocytosis of the virion. This is Envelopment polyprotein (GP) from Homo sapiens (Human).